The chain runs to 461 residues: tRNA modification GTPase MnmE (461 aa).

Residues Arg23, Glu88, and Arg127 each coordinate (6S)-5-formyl-5,6,7,8-tetrahydrofolate. The TrmE-type G domain occupies Gly223 to Tyr382. K(+) is bound at residue Asn233. GTP-binding positions include Asn233 to Ser238, Thr252 to Thr258, and Asp277 to Gly280. Ser237 serves as a coordination point for Mg(2+). K(+) is bound by residues Thr252, Val254, and Thr257. Residue Thr258 participates in Mg(2+) binding. Lys461 contributes to the (6S)-5-formyl-5,6,7,8-tetrahydrofolate binding site.

This sequence belongs to the TRAFAC class TrmE-Era-EngA-EngB-Septin-like GTPase superfamily. TrmE GTPase family. Homodimer. Heterotetramer of two MnmE and two MnmG subunits. K(+) is required as a cofactor.

Its subcellular location is the cytoplasm. In terms of biological role, exhibits a very high intrinsic GTPase hydrolysis rate. Involved in the addition of a carboxymethylaminomethyl (cmnm) group at the wobble position (U34) of certain tRNAs, forming tRNA-cmnm(5)s(2)U34. This is tRNA modification GTPase MnmE from Alkaliphilus oremlandii (strain OhILAs) (Clostridium oremlandii (strain OhILAs)).